Consider the following 190-residue polypeptide: Jupiter microtubule associated homolog 2 (190 aa).

At Met1 the chain carries N-acetylmethionine. The disordered stretch occupies residues 1–190; that stretch reads MFQVPDSEGG…PGGKSSISFY (190 aa). Residue Ser30 is modified to Phosphoserine. Position 35 is a phosphothreonine (Thr35). Polar residues predominate over residues 35-44; sequence TPSSRPNRMA. A phosphoserine mark is found at Ser45, Ser69, and Ser97. Residues 110 to 129 are compositionally biased toward basic and acidic residues; sequence KPKDHVFLCEGEEPKSDLKA. Residues Ser132 and Ser144 each carry the phosphoserine modification. The segment covering 139 to 167 has biased composition (basic and acidic residues); it reads PGEKGSARKAGPAKEQEPMPTVDSHEPRL.

The protein belongs to the JUPITER family. As to quaternary structure, monomer. Dimer. Interacts with TPCN1. As to expression, expressed in liver, kidney, prostate, testis and uterus.

The protein resides in the cytoplasm. The protein localises to the nucleus. Its function is as follows. Nicotinic acid adenine dinucleotide phosphate (NAADP) binding protein required for NAADP-evoked intracellular calcium release. Confers NAADP-sensitivity to the two pore channels (TPCs) complex. Enables NAADP to activate Ca(2+) release from the endoplasmic reticulum through ryanodine receptors. In terms of biological role, (Microbial infection) Involved in the endolysosomal trafficking of human coronavirus SARS-CoV-2. The polypeptide is Jupiter microtubule associated homolog 2 (Homo sapiens (Human)).